Here is a 1146-residue protein sequence, read N- to C-terminus: Lysine-specific demethylase 2A (1146 aa).

Residues 146 to 314 (FSHTKLENLV…MQLRIYSIED (169 aa)) form the JmjC domain. Thr207 contacts substrate. Fe cation is bound by residues His210 and Asp212. Substrate is bound at residue Lys227. His282 contacts Fe cation. 2 disordered regions span residues 363-467 (LNGR…PDSP) and 554-585 (TKPH…SSGA). Low complexity predominate over residues 373–387 (SSSSSSSSSGLSSSS). Acidic residues predominate over residues 388–401 (DNDDSSDQDWEEEE). A compositionally biased stretch (basic and acidic residues) spans 402–442 (GLRKRERDRCRVERELQRKRNRDRQQRDQERDRHGRTERII). Positions 453-467 (LTPPPSLPLPTPDSP) are enriched in pro residues. Over residues 566–584 (STAPPRTSGTPSGTTASSG) the composition is skewed to low complexity. The segment at 585 to 631 (ARRRRVRCRKCQACVQRECGTCHYCKDMKKFGGPGRMKQSCVLRQCL) adopts a CXXC-type zinc-finger fold. Zn(2+) is bound by residues Cys592, Cys595, Cys598, Cys603, Cys606, Cys609, Cys625, and Cys630. A PHD-type zinc finger spans residues 638–699 (SVTCALCGEV…YWECPKCYEG (62 aa)). Disordered regions lie at residues 733–800 (VLRP…EGDR) and 832–867 (TPNP…ENVM). Residues 739 to 762 (GQSPPSPPLLLLPPSPSSAPPTPP) show a composition bias toward pro residues. Basic and acidic residues predominate over residues 772–789 (SREERAKRRQLAREKENH). Residues 849-864 (EREEEEEEEEEEEETE) are compositionally biased toward acidic residues. Residues 874 to 919 (STSMQKDVWLSVFHYLTHEELCICMRVCKAWYKWGCDKRLWSRIDV) enclose the F-box domain. 6 LRR repeats span residues 945-966 (WTNV…LKDL), 968-994 (LAGC…DLRW), 1032-1057 (GLDI…DLSH), 1058-1087 (CPLL…HLAG), 1088-1112 (CKGV…DLHG), and 1113-1138 (CKQV…CLSD).

It belongs to the JHDM1 histone demethylase family. It depends on Fe(2+) as a cofactor.

The protein localises to the nucleus. The protein resides in the nucleoplasm. It carries out the reaction N(6),N(6)-dimethyl-L-lysyl(36)-[histone H3] + 2 2-oxoglutarate + 2 O2 = L-lysyl(36)-[histone H3] + 2 formaldehyde + 2 succinate + 2 CO2. Functionally, histone demethylase that specifically demethylates 'Lys-36' of histone H3, thereby playing a central role in histone code. Preferentially demethylates dimethylated H3 'Lys-36' residue while it has weak or no activity for mono- and tri-methylated H3 'Lys-36'. May also recognize and bind to some phosphorylated proteins and promote their ubiquitination and degradation. Required to maintain the heterochromatic state. Associates with centromeres and represses transcription of small non-coding RNAs that are encoded by the clusters of satellite repeats at the centromere. Required to sustain centromeric integrity and genomic stability, particularly during mitosis. May play a role in the regulation of circadian gene expression. The chain is Lysine-specific demethylase 2A (kdm2a) from Xenopus tropicalis (Western clawed frog).